The primary structure comprises 490 residues: UDP-N-acetylmuramoyl-L-alanyl-D-glutamate--2,6-diaminopimelate ligase (490 aa).

UDP-N-acetyl-alpha-D-muramoyl-L-alanyl-D-glutamate contacts are provided by residues leucine 22, serine 24, and 39–41 (HQT). An ATP-binding site is contributed by 111–117 (GTNGKTT). UDP-N-acetyl-alpha-D-muramoyl-L-alanyl-D-glutamate is bound by residues asparagine 152, 153–154 (TT), serine 180, glutamine 186, and arginine 188. Position 220 is an N6-carboxylysine (lysine 220). Residues arginine 385, 409–412 (DNPR), glycine 460, and glutamate 464 contribute to the meso-2,6-diaminopimelate site. Residues 409-412 (DNPR) carry the Meso-diaminopimelate recognition motif motif.

It belongs to the MurCDEF family. MurE subfamily. The cofactor is Mg(2+). In terms of processing, carboxylation is probably crucial for Mg(2+) binding and, consequently, for the gamma-phosphate positioning of ATP.

It localises to the cytoplasm. It catalyses the reaction UDP-N-acetyl-alpha-D-muramoyl-L-alanyl-D-glutamate + meso-2,6-diaminopimelate + ATP = UDP-N-acetyl-alpha-D-muramoyl-L-alanyl-gamma-D-glutamyl-meso-2,6-diaminopimelate + ADP + phosphate + H(+). It participates in cell wall biogenesis; peptidoglycan biosynthesis. Its function is as follows. Catalyzes the addition of meso-diaminopimelic acid to the nucleotide precursor UDP-N-acetylmuramoyl-L-alanyl-D-glutamate (UMAG) in the biosynthesis of bacterial cell-wall peptidoglycan. This chain is UDP-N-acetylmuramoyl-L-alanyl-D-glutamate--2,6-diaminopimelate ligase, found in Yersinia pestis.